Reading from the N-terminus, the 715-residue chain is Ribosomal RNA large subunit methyltransferase K/L (715 aa).

The 112-residue stretch at 43 to 154 (TQYRALLWSR…RDDLVLSLDL (112 aa)) folds into the THUMP domain.

The protein belongs to the methyltransferase superfamily. RlmKL family.

It localises to the cytoplasm. The catalysed reaction is guanosine(2445) in 23S rRNA + S-adenosyl-L-methionine = N(2)-methylguanosine(2445) in 23S rRNA + S-adenosyl-L-homocysteine + H(+). The enzyme catalyses guanosine(2069) in 23S rRNA + S-adenosyl-L-methionine = N(2)-methylguanosine(2069) in 23S rRNA + S-adenosyl-L-homocysteine + H(+). Specifically methylates the guanine in position 2445 (m2G2445) and the guanine in position 2069 (m7G2069) of 23S rRNA. This chain is Ribosomal RNA large subunit methyltransferase K/L, found in Mannheimia succiniciproducens (strain KCTC 0769BP / MBEL55E).